Here is a 374-residue protein sequence, read N- to C-terminus: Alpha-galactosylglucosyldiacylglycerol synthase (374 aa).

Belongs to the glycosyltransferase group 1 family. Glycosyltransferase 4 subfamily. The cofactor is Mg(2+).

It is found in the cell membrane. It carries out the reaction a 1,2-diacyl-3-O-(alpha-D-glucopyranosyl)-sn-glycerol + UDP-alpha-D-galactose = a 1,2-diacyl-3-O-[alpha-D-galactopyranosyl-(1-&gt;2)-alpha-D-glucopyranosyl]-sn-glycerol + UDP + H(+). With respect to regulation, activated by the negatively charged lipid phosphatidylglycerol (PG). In terms of biological role, galactosyltransferase involved in the biosynthesis of the bilayer-forming membrane lipid alpha-galactosyl-glucosyldiacylglycerol which is involved in maintaining constant nonbilayer/bilayer conditions (curvature packing stress). Also involved in the beta-lactam resistance. Catalyzes the transfer of a galactosyl residue from UDP-Gal to alpha-glucosyl-DAG (1,2-diacyl-3-O-(alpha-D-glucopyranosyl)-sn-glycerol) acceptor to form the corresponding galactosyl-glycosyl-DAG product (3-O-alpha-(D-galactopyranosyl-alpha-(1-&gt;2)-D-glucopyranosyl)-1,2-diacyl-sn-glycerol). It can only use UDP-Gal as sugar donor and alpha-glucosyl-DAG is the preferred sugar acceptor. The protein is Alpha-galactosylglucosyldiacylglycerol synthase (cpoA) of Streptococcus pneumoniae (strain ATCC BAA-255 / R6).